Consider the following 168-residue polypeptide: MTQEGKIEAILFAAGQAVKIRTLAEALEVTEEEVRELLKRLKEEYVKNHRGIDIVIFEDKVEMCTNDSYGDIVRKALKMEITQGLSQAALEVLAIIAYNQPITKAEIERIRGVRSDKPINTLLEYNLIKESGRASSPGRPILYSTTEDFLKYFGISSLKELPEIEPTS.

It belongs to the ScpB family. In terms of assembly, homodimer. Homodimerization may be required to stabilize the binding of ScpA to the Smc head domains. Component of a cohesin-like complex composed of ScpA, ScpB and the Smc homodimer, in which ScpA and ScpB bind to the head domain of Smc. The presence of the three proteins is required for the association of the complex with DNA.

Its subcellular location is the cytoplasm. Its function is as follows. Participates in chromosomal partition during cell division. May act via the formation of a condensin-like complex containing Smc and ScpA that pull DNA away from mid-cell into both cell halves. This Caldanaerobacter subterraneus subsp. tengcongensis (strain DSM 15242 / JCM 11007 / NBRC 100824 / MB4) (Thermoanaerobacter tengcongensis) protein is Segregation and condensation protein B.